We begin with the raw amino-acid sequence, 473 residues long: ATP synthase subunit beta 2 (473 aa).

Residue 158–165 participates in ATP binding; that stretch reads GGAGVGKT.

The protein belongs to the ATPase alpha/beta chains family. As to quaternary structure, F-type ATPases have 2 components, CF(1) - the catalytic core - and CF(0) - the membrane proton channel. CF(1) has five subunits: alpha(3), beta(3), gamma(1), delta(1), epsilon(1). CF(0) has three main subunits: a(1), b(2) and c(9-12). The alpha and beta chains form an alternating ring which encloses part of the gamma chain. CF(1) is attached to CF(0) by a central stalk formed by the gamma and epsilon chains, while a peripheral stalk is formed by the delta and b chains.

It localises to the cell membrane. The enzyme catalyses ATP + H2O + 4 H(+)(in) = ADP + phosphate + 5 H(+)(out). In terms of biological role, produces ATP from ADP in the presence of a proton gradient across the membrane. The catalytic sites are hosted primarily by the beta subunits. The chain is ATP synthase subunit beta 2 from Listeria monocytogenes serotype 4b (strain F2365).